Here is a 204-residue protein sequence, read N- to C-terminus: Elongation factor Ts (204 aa).

The involved in Mg(2+) ion dislocation from EF-Tu stretch occupies residues T80–V83.

It belongs to the EF-Ts family.

It localises to the cytoplasm. Functionally, associates with the EF-Tu.GDP complex and induces the exchange of GDP to GTP. It remains bound to the aminoacyl-tRNA.EF-Tu.GTP complex up to the GTP hydrolysis stage on the ribosome. The sequence is that of Elongation factor Ts from Caldicellulosiruptor bescii (strain ATCC BAA-1888 / DSM 6725 / KCTC 15123 / Z-1320) (Anaerocellum thermophilum).